A 1052-amino-acid polypeptide reads, in one-letter code: CCAAT/enhancer-binding protein zeta (1052 aa).

3 disordered regions span residues 1–40 (MSADQEPVAFLAKQPWRPKQVTEDPDEEDEEDGDEGKNGF), 122–158 (VENKKQKATEGKKTSEKKVKNKTVAEQRPESCPVSKA), and 621–677 (SQLD…AEKP). The span at 23 to 34 (EDPDEEDEEDGD) shows a compositional bias: acidic residues. Residues 122–150 (VENKKQKATEGKKTSEKKVKNKTVAEQRP) show a composition bias toward basic and acidic residues. A compositionally biased stretch (acidic residues) spans 627–643 (PESDEENFVDVGDDSDD). Phosphoserine is present on residues Ser629 and Ser641. Residues 644 to 677 (EKFTDADKGTATDAVKEVESKETEPESSAEAEKP) show a composition bias toward basic and acidic residues. Ser837 bears the Phosphoserine mark. Residues 876–969 (KGAKADLEDS…QGQKKKKKSF (94 aa)) are disordered. The span at 883–932 (EDSESSDGELGDLDDDEVSLGSMNDEDFEIDEDGGTFMDVSDDESEDAPE) shows a compositional bias: acidic residues. A phosphoserine mark is found at Ser958, Ser972, and Ser977. The tract at residues 1032-1052 (KKKKNFRKKMKAPQKPKRQRK) is disordered.

Belongs to the CBF/MAK21 family. As to expression, ubiquitous.

The protein localises to the nucleus. Stimulates transcription from the HSP70 promoter. The chain is CCAAT/enhancer-binding protein zeta (Cebpz) from Mus musculus (Mouse).